The following is a 392-amino-acid chain: MNNFTYTLEHSDGEARAGQFSTPHGTIQTPVFMPVGTQATVKTLDPLEVEAIGSQIILSNTYHLYLRPSADLVAEMGGLHRFMQWPKPILTDSGGFQVFSLGPHSKIDEDGVTFKSHIDGSKHRFTPESAIGIQEKLGADIIMAFDECAPQPTTHAYTKAAMERTHRWLLRCIAAKTRADQALFGIVQGGVEADLRRESASFIAQQDVPGIGIGGLSVGEPKEQMYGMLEETTPLLPRNKPRYLMGVGSPEDLLEGVARGVDMFDCVLPTRLGRNGALFIPEGRLNIGNAKYAREDAPIDATCDCSTCQRFSRAYLRHLFRTEEVLGLRLATLHNLRFLIRLMEQAREAILQDRYQSFMDDWLSRFQTIPHAVREASRAARLNSLRTQGDKA.

D92 functions as the Proton acceptor in the catalytic mechanism. Residues 92 to 96, D146, Q188, and G215 each bind substrate; that span reads DSGGF. The RNA binding stretch occupies residues 246–252; it reads GVGSPED. Catalysis depends on D265, which acts as the Nucleophile. Positions 270 to 274 are RNA binding; important for wobble base 34 recognition; the sequence is TRLGR. Zn(2+) contacts are provided by C303, C305, C308, and H334.

The protein belongs to the queuine tRNA-ribosyltransferase family. In terms of assembly, homodimer. Within each dimer, one monomer is responsible for RNA recognition and catalysis, while the other monomer binds to the replacement base PreQ1. It depends on Zn(2+) as a cofactor.

It catalyses the reaction 7-aminomethyl-7-carbaguanine + guanosine(34) in tRNA = 7-aminomethyl-7-carbaguanosine(34) in tRNA + guanine. It participates in tRNA modification; tRNA-queuosine biosynthesis. In terms of biological role, catalyzes the base-exchange of a guanine (G) residue with the queuine precursor 7-aminomethyl-7-deazaguanine (PreQ1) at position 34 (anticodon wobble position) in tRNAs with GU(N) anticodons (tRNA-Asp, -Asn, -His and -Tyr). Catalysis occurs through a double-displacement mechanism. The nucleophile active site attacks the C1' of nucleotide 34 to detach the guanine base from the RNA, forming a covalent enzyme-RNA intermediate. The proton acceptor active site deprotonates the incoming PreQ1, allowing a nucleophilic attack on the C1' of the ribose to form the product. After dissociation, two additional enzymatic reactions on the tRNA convert PreQ1 to queuine (Q), resulting in the hypermodified nucleoside queuosine (7-(((4,5-cis-dihydroxy-2-cyclopenten-1-yl)amino)methyl)-7-deazaguanosine). In Herpetosiphon aurantiacus (strain ATCC 23779 / DSM 785 / 114-95), this protein is Queuine tRNA-ribosyltransferase.